Reading from the N-terminus, the 118-residue chain is Thioredoxin H5 (118 aa).

A2 is modified (N-acetylalanine). Residues 2-113 enclose the Thioredoxin domain; it reads AGEGEVIACH…INEKLMKHGG (112 aa). Residues C39 and C42 each act as nucleophile in the active site. Cysteines 39 and 42 form a disulfide.

The protein belongs to the thioredoxin family. Plant H-type subfamily. As to quaternary structure, interacts with MDH1.

It is found in the cytoplasm. Its function is as follows. Thiol-disulfide oxidoreductase involved in response to pathogens and oxidative stresses. Required for the response to victorin, a phytotoxin which induces programmed cell death in sensitive plants. Possesses insulin disulfide bonds reducing activity. In Arabidopsis thaliana (Mouse-ear cress), this protein is Thioredoxin H5 (TRX5).